Here is a 49-residue protein sequence, read N- to C-terminus: Splenin (49 aa).

The 44-residue stretch at 4 to 47 folds into the LEM-like domain; it reads LEDPSVLTKEKLKSELVANNVTLPAGEQRKEVYVELYLQHLTAL. Residues 32–36 are essential for biological activity; sequence RKEVY.

Belongs to the thymopoietin family.

Functionally, hormone of the spleen with pleiotropic actions on prothymocytes, mature T-cells, the nicotinic acetylcholine receptor, and pituitary corticotrophs. This Bos taurus (Bovine) protein is Splenin (SP).